Here is a 175-residue protein sequence, read N- to C-terminus: Large ribosomal subunit protein uL10 (175 aa).

This sequence belongs to the universal ribosomal protein uL10 family. In terms of assembly, part of the ribosomal stalk of the 50S ribosomal subunit. The N-terminus interacts with L11 and the large rRNA to form the base of the stalk. The C-terminus forms an elongated spine to which L12 dimers bind in a sequential fashion forming a multimeric L10(L12)X complex.

In terms of biological role, forms part of the ribosomal stalk, playing a central role in the interaction of the ribosome with GTP-bound translation factors. In Halorhodospira halophila (strain DSM 244 / SL1) (Ectothiorhodospira halophila (strain DSM 244 / SL1)), this protein is Large ribosomal subunit protein uL10.